The sequence spans 123 residues: Histone H2B.3 (123 aa).

The segment at 1–30 (MPPKVSGKAAKKAGKAQKNISKGDKKKNRK) is disordered. An O-linked (GlcNAc) serine glycan is attached at Ser110. Lys118 is covalently cross-linked (Glycyl lysine isopeptide (Lys-Gly) (interchain with G-Cter in ubiquitin)).

This sequence belongs to the histone H2B family. As to quaternary structure, the nucleosome is a histone octamer containing two molecules each of H2A, H2B, H3 and H4 assembled in one H3-H4 heterotetramer and two H2A-H2B heterodimers. The octamer wraps approximately 147 bp of DNA. In terms of processing, monoubiquitination of Lys-118 gives a specific tag for epigenetic transcriptional activation and is also prerequisite for histone H3 'Lys-4' and 'Lys-79' methylation. GlcNAcylation at Ser-110 promotes monoubiquitination of Lys-118. It fluctuates in response to extracellular glucose, and associates with transcribed genes.

The protein localises to the nucleus. Its subcellular location is the chromosome. Core component of nucleosome. Nucleosomes wrap and compact DNA into chromatin, limiting DNA accessibility to the cellular machineries which require DNA as a template. Histones thereby play a central role in transcription regulation, DNA repair, DNA replication and chromosomal stability. DNA accessibility is regulated via a complex set of post-translational modifications of histones, also called histone code, and nucleosome remodeling. The protein is Histone H2B.3 of Tigriopus californicus (Marine copepod).